Here is a 261-residue protein sequence, read N- to C-terminus: Class II histocompatibility antigen, M alpha chain (261 aa).

The signal sequence occupies residues 1-26 (MEHEQKSGAVLLRLLRLLWLLPHSWA). Positions 27–124 (VLEASTPVLW…KLEGQIPVSR (98 aa)) are alpha-1. The Lumenal segment spans residues 27–231 (VLEASTPVLW…ALPSDLLENA (205 aa)). Residue Asn41 is glycosylated (N-linked (GlcNAc...) asparagine). Intrachain disulfides connect Cys50/Cys105 and Cys147/Cys202. The region spanning 114–215 (PKLEGQIPVS…HEIDRYTAIA (102 aa)) is the Ig-like C1-type domain. Positions 125-217 (GLSVAEVFTL…IDRYTAIAYW (93 aa)) are alpha-2. The connecting peptide stretch occupies residues 218-231 (VPQNALPSDLLENA). A helical membrane pass occupies residues 232–252 (LCGVAFALGVLGTIIGIVFFL). Residues 253 to 261 (CSQRPCSGD) are Cytoplasmic-facing.

Belongs to the MHC class II family. In terms of assembly, heterodimer of an alpha chain (DMA) and a beta chain (DMB). Interacts with MHCII; this interaction mediates rapid selection of high-affinity peptides.

It is found in the late endosome membrane. The protein resides in the lysosome membrane. Functionally, plays a critical role in catalyzing the release of class II-associated invariant chain peptide (CLIP) from newly synthesized MHC class II molecules and freeing the peptide binding site for acquisition of antigenic peptides. This Mus musculus (Mouse) protein is Class II histocompatibility antigen, M alpha chain (H2-DMa).